The following is a 346-amino-acid chain: Holliday junction branch migration complex subunit RuvB (346 aa).

Positions Met1 to Tyr182 are large ATPase domain (RuvB-L). Residues Leu21, Arg22, Gly63, Lys66, Thr67, Thr68, Glu129–Phe131, Arg172, Tyr182, and Arg219 each bind ATP. Thr67 serves as a coordination point for Mg(2+). The tract at residues Thr183–Leu253 is small ATPAse domain (RuvB-S). Residues Asn256 to Asp346 are head domain (RuvB-H). DNA contacts are provided by Arg292, Arg311, and Arg316.

It belongs to the RuvB family. Homohexamer. Forms an RuvA(8)-RuvB(12)-Holliday junction (HJ) complex. HJ DNA is sandwiched between 2 RuvA tetramers; dsDNA enters through RuvA and exits via RuvB. An RuvB hexamer assembles on each DNA strand where it exits the tetramer. Each RuvB hexamer is contacted by two RuvA subunits (via domain III) on 2 adjacent RuvB subunits; this complex drives branch migration. In the full resolvosome a probable DNA-RuvA(4)-RuvB(12)-RuvC(2) complex forms which resolves the HJ.

It localises to the cytoplasm. The catalysed reaction is ATP + H2O = ADP + phosphate + H(+). In terms of biological role, the RuvA-RuvB-RuvC complex processes Holliday junction (HJ) DNA during genetic recombination and DNA repair, while the RuvA-RuvB complex plays an important role in the rescue of blocked DNA replication forks via replication fork reversal (RFR). RuvA specifically binds to HJ cruciform DNA, conferring on it an open structure. The RuvB hexamer acts as an ATP-dependent pump, pulling dsDNA into and through the RuvAB complex. RuvB forms 2 homohexamers on either side of HJ DNA bound by 1 or 2 RuvA tetramers; 4 subunits per hexamer contact DNA at a time. Coordinated motions by a converter formed by DNA-disengaged RuvB subunits stimulates ATP hydrolysis and nucleotide exchange. Immobilization of the converter enables RuvB to convert the ATP-contained energy into a lever motion, pulling 2 nucleotides of DNA out of the RuvA tetramer per ATP hydrolyzed, thus driving DNA branch migration. The RuvB motors rotate together with the DNA substrate, which together with the progressing nucleotide cycle form the mechanistic basis for DNA recombination by continuous HJ branch migration. Branch migration allows RuvC to scan DNA until it finds its consensus sequence, where it cleaves and resolves cruciform DNA. The chain is Holliday junction branch migration complex subunit RuvB from Rhizobium etli (strain CIAT 652).